A 445-amino-acid polypeptide reads, in one-letter code: Oxysterols receptor LXR-alpha (445 aa).

2 disordered regions span residues 1 to 34 (MSLWLEASMPDVSPDSATELWKTEPQDAGDQGGN) and 63 to 86 (ALLPRAETLPEPTELRPQKRKKGP). The segment at 1-94 (MSLWLEASMP…GPAPKMLGNE (94 aa)) is transactivation AF-1; required for ligand-independent transactivation function. Residues 93-168 (NELCSVCGDK…AGMREECVLS (76 aa)) constitute a DNA-binding region (nuclear receptor). 2 NR C4-type zinc fingers span residues 96 to 116 (CSVCGDKASGFHYNVLSCEGC) and 132 to 156 (CHSGGHCPMDTYMRRKCQECRLRKC). Residue Ser191 is modified to Phosphoserine. The transactivation AF-2; required for ligand-dependent transactivation function; mediates interaction with CCAR2 stretch occupies residues 203-445 (QLSPEQLGMI…LLSEIWDVHE (243 aa)). The region spanning 207–445 (EQLGMIEKLV…LLSEIWDVHE (239 aa)) is the NR LBD domain.

Belongs to the nuclear hormone receptor family. NR1 subfamily. As to quaternary structure, heterodimer of NR1H3 and RXR (retinoic acid receptor). Interacts with CCAR2 (via N-terminus) in a ligand-independent manner. Interacts with SIRT1 and this interaction is inhibited by CCAR2. Ubiquitinated. Ubiquitination by UBR5 leads to its degradation: UBR5 specifically recognizes and binds ligand-bound NR1H3 when it is not associated with coactivators (NCOAs). In presence of NCOAs, the UBR5-degron is not accessible, preventing its ubiquitination and degradation.

The protein resides in the nucleus. It is found in the cytoplasm. Functionally, nuclear receptor that exhibits a ligand-dependent transcriptional activation activity. Interaction with retinoic acid receptor (RXR) shifts RXR from its role as a silent DNA-binding partner to an active ligand-binding subunit in mediating retinoid responses through target genes defined by LXRES. LXRES are DR4-type response elements characterized by direct repeats of two similar hexanuclotide half-sites spaced by four nucleotides. Plays an important role in the regulation of cholesterol homeostasis, regulating cholesterol uptake through MYLIP-dependent ubiquitination of LDLR, VLDLR and LRP8. Interplays functionally with RORA for the regulation of genes involved in liver metabolism. Induces LPCAT3-dependent phospholipid remodeling in endoplasmic reticulum (ER) membranes of hepatocytes, driving SREBF1 processing and lipogenesis. Via LPCAT3, triggers the incorporation of arachidonate into phosphatidylcholines of ER membranes, increasing membrane dynamics and enabling triacylglycerols transfer to nascent very low-density lipoprotein (VLDL) particles. Via LPCAT3 also counteracts lipid-induced ER stress response and inflammation, likely by modulating SRC kinase membrane compartmentalization and limiting the synthesis of lipid inflammatory mediators. The sequence is that of Oxysterols receptor LXR-alpha (Nr1h3) from Mus musculus (Mouse).